Here is a 180-residue protein sequence, read N- to C-terminus: Urease accessory protein UreE (180 aa).

Positions 71 to 90 are disordered; the sequence is AAPSGAGHGDGEQDGTGAPG.

The protein belongs to the UreE family.

The protein resides in the cytoplasm. Its function is as follows. Involved in urease metallocenter assembly. Binds nickel. Probably functions as a nickel donor during metallocenter assembly. The chain is Urease accessory protein UreE from Kocuria rhizophila (strain ATCC 9341 / DSM 348 / NBRC 103217 / DC2201).